Consider the following 602-residue polypeptide: Elongation factor 4 (602 aa).

One can recognise a tr-type G domain in the interval 7–188 (ENIRNFSIIA…SIIRLVPPPK (182 aa)). GTP contacts are provided by residues 19-24 (DHGKST) and 135-138 (NKID).

This sequence belongs to the TRAFAC class translation factor GTPase superfamily. Classic translation factor GTPase family. LepA subfamily.

It is found in the cell inner membrane. It catalyses the reaction GTP + H2O = GDP + phosphate + H(+). Required for accurate and efficient protein synthesis under certain stress conditions. May act as a fidelity factor of the translation reaction, by catalyzing a one-codon backward translocation of tRNAs on improperly translocated ribosomes. Back-translocation proceeds from a post-translocation (POST) complex to a pre-translocation (PRE) complex, thus giving elongation factor G a second chance to translocate the tRNAs correctly. Binds to ribosomes in a GTP-dependent manner. This Chlamydia trachomatis serovar D (strain ATCC VR-885 / DSM 19411 / UW-3/Cx) protein is Elongation factor 4.